We begin with the raw amino-acid sequence, 364 residues long: Oxidized low-density lipoprotein receptor 1 (364 aa).

The interval 1-21 (MAFDDKMKPVNGQPDQKSCGK) is disordered. The Cytoplasmic portion of the chain corresponds to 1–31 (MAFDDKMKPVNGQPDQKSCGKKPKGLHLLSS). The helical; Signal-anchor for type II membrane protein transmembrane segment at 32-54 (TWWCPAAVTLAILCLVLSVTLIV) threads the bilayer. Residues C35 and C45 are each lipidated (S-palmitoyl cysteine). Residues 55–242 (QQTQLLQVSD…GPCPQDWIWH (188 aa)) are neck. Residues 55–364 (QQTQLLQVSD…QKKANLLLTQ (310 aa)) lie on the Extracellular side of the membrane. 3 N-linked (GlcNAc...) asparagine glycosylation sites follow: N72, N92, and N138. A coiled-coil region spans residues 83 to 233 (QMSAQKKAEN…ALQRAANSSG (151 aa)). 3 repeat units span residues 96–141 (ESKR…NASE), 142–187 (ESKW…KYSE), and 188–233 (ESQR…NSSG). 3 cysteine pairs are disulfide-bonded: C235-C246, C262-C354, and C333-C346. The 114-residue stretch at 242–355 (HKENCYLFHG…CILTAFSICQ (114 aa)) folds into the C-type lectin domain.

Homodimer; disulfide-linked. May form a hexamer composed of 3 homodimers. Interacts with HSP70. N-glycosylated. Predominantly expressed in lung and at lower level in kidney. Expressed in macrophages but not in vascular smooth muscle cells.

The protein localises to the cell membrane. The protein resides in the membrane raft. It is found in the secreted. Its function is as follows. Receptor that mediates the recognition, internalization and degradation of oxidatively modified low density lipoprotein (oxLDL) by vascular endothelial cells. OxLDL is a marker of atherosclerosis that induces vascular endothelial cell activation and dysfunction, resulting in pro-inflammatory responses, pro-oxidative conditions and apoptosis. Its association with oxLDL induces the activation of NF-kappa-B through an increased production of intracellular reactive oxygen and a variety of pro-atherogenic cellular responses including a reduction of nitric oxide (NO) release, monocyte adhesion and apoptosis. In addition to binding oxLDL, it acts as a receptor for the HSP70 protein involved in antigen cross-presentation to naive T-cells in dendritic cells, thereby participating in cell-mediated antigen cross-presentation. Also involved in inflammatory process, by acting as a leukocyte-adhesion molecule at the vascular interface in endotoxin-induced inflammation. Also acts as a receptor for advanced glycation end (AGE) products, activated platelets, monocytes, apoptotic cells and both Gram-negative and Gram-positive bacteria. The chain is Oxidized low-density lipoprotein receptor 1 (Olr1) from Rattus norvegicus (Rat).